Reading from the N-terminus, the 1906-residue chain is DENN domain-containing protein 4C (1906 aa).

An MABP domain is found at 40–199; that stretch reads KAPITDIAVI…NVFLCYKKSV (160 aa). The 173-residue stretch at 191-363 folds into the uDENN domain; that stretch reads VFLCYKKSVP…NIPFPSPQRP (173 aa). The cDENN domain maps to 384–520; that stretch reads PLPLSGANFS…PCKSLLGTLR (137 aa). Positions 522 to 640 constitute a dDENN domain; sequence LYQQLCSVHR…CSFVSDKDTG (119 aa). Phosphoserine occurs at positions 702, 736, and 740. The PPR repeat unit spans residues 818 to 852; the sequence is DEVCYRVVMQLCGLWVNPVLAVRVLFEMKTARIKP. Polar residues predominate over residues 904 to 917; sequence SQVFSISGGQSDQG. 2 disordered regions span residues 904–942 and 963–984; these read SQVF…PPEL and LQPT…SIVK. Positions 920-939 are enriched in basic and acidic residues; it reads SKDELVKEGADGHAPEEHTP. A Phosphothreonine modification is found at T966. The segment covering 966–975 has biased composition (pro residues); sequence TPEPQSPTEP. S971 is modified (phosphoserine). T973 is modified (phosphothreonine). Residues S987, S1000, S1043, S1058, S1096, and S1123 each carry the phosphoserine modification. The span at 1154-1171 shows a compositional bias: polar residues; sequence NSLQSNSHSDQSRDTQAG. The segment at 1154–1184 is disordered; that stretch reads NSLQSNSHSDQSRDTQAGAQDPVNKRSSSYA. Phosphoserine is present on residues S1181, S1221, S1240, S1248, and S1274. The tract at residues 1246-1317 is disordered; it reads SCSMELHGEG…PQSPYRAYKD (72 aa). A compositionally biased stretch (basic and acidic residues) spans 1281–1291; the sequence is PPARDSTETEK. Over residues 1292 to 1302 the composition is skewed to polar residues; it reads SSPAVSSSKTL. Residues S1321, S1333, and S1342 each carry the phosphoserine modification. 3 disordered regions span residues 1410–1440, 1548–1577, and 1596–1628; these read SPNT…GDVG, STSG…SAEP, and ASYT…LSKR. The segment covering 1423–1437 has biased composition (low complexity); sequence LTQSNTSLGSSSSSG. Composition is skewed to polar residues over residues 1548 to 1564 and 1611 to 1628; these read STSG…SASE and GDVQ…LSKR. Phosphoserine occurs at positions 1620, 1624, 1626, 1637, and 1796.

Post-translationally, phosphorylated in response to insulin.

Its subcellular location is the cytoplasmic vesicle membrane. The protein localises to the cell membrane. It localises to the cytoplasm. The protein resides in the cytosol. Guanine nucleotide exchange factor (GEF) activating RAB10. Promotes the exchange of GDP to GTP, converting inactive GDP-bound RAB10 into its active GTP-bound form. Thereby, stimulates SLC2A4/GLUT4 glucose transporter-enriched vesicles delivery to the plasma membrane in response to insulin. The polypeptide is DENN domain-containing protein 4C (Dennd4c) (Mus musculus (Mouse)).